Reading from the N-terminus, the 691-residue chain is Elongation factor G (691 aa).

One can recognise a tr-type G domain in the interval 12 to 286 (KKLRNIGIMA…GVLEYLPSPL (275 aa)). GTP contacts are provided by residues 21–28 (AHIDAGKT), 85–89 (DTPGH), and 139–142 (NKMD).

Belongs to the TRAFAC class translation factor GTPase superfamily. Classic translation factor GTPase family. EF-G/EF-2 subfamily.

The protein localises to the cytoplasm. Functionally, catalyzes the GTP-dependent ribosomal translocation step during translation elongation. During this step, the ribosome changes from the pre-translocational (PRE) to the post-translocational (POST) state as the newly formed A-site-bound peptidyl-tRNA and P-site-bound deacylated tRNA move to the P and E sites, respectively. Catalyzes the coordinated movement of the two tRNA molecules, the mRNA and conformational changes in the ribosome. The sequence is that of Elongation factor G from Thermosipho melanesiensis (strain DSM 12029 / CIP 104789 / BI429).